A 426-amino-acid polypeptide reads, in one-letter code: Glutamate-1-semialdehyde 2,1-aminomutase (426 aa).

Lysine 268 is subject to N6-(pyridoxal phosphate)lysine.

The protein belongs to the class-III pyridoxal-phosphate-dependent aminotransferase family. HemL subfamily. Pyridoxal 5'-phosphate is required as a cofactor.

It is found in the cytoplasm. The enzyme catalyses (S)-4-amino-5-oxopentanoate = 5-aminolevulinate. Its pathway is porphyrin-containing compound metabolism; protoporphyrin-IX biosynthesis; 5-aminolevulinate from L-glutamyl-tRNA(Glu): step 2/2. The protein is Glutamate-1-semialdehyde 2,1-aminomutase of Saccharolobus islandicus (strain M.16.27) (Sulfolobus islandicus).